The primary structure comprises 86 residues: MKNLIAELLFKLAQKEEESKELCAQVEALEIIVTAMLRNMAQNDQQRLIDQVEGALYEVKPDASIPDDDTELLRDYVKKLLKHPCQ.

The stretch at 1-36 (MKNLIAELLFKLAQKEEESKELCAQVEALEIIVTAM) forms a coiled coil.

This sequence belongs to the IraP family. As to quaternary structure, interacts with RssB.

It localises to the cytoplasm. Inhibits RpoS proteolysis by regulating RssB activity, thereby increasing the stability of the sigma stress factor RpoS especially during phosphate starvation, but also in stationary phase and during nitrogen starvation. Its effect on RpoS stability is due to its interaction with RssB, which probably blocks the interaction of RssB with RpoS, and the consequent delivery of the RssB-RpoS complex to the ClpXP protein degradation pathway. This Shigella flexneri serotype 5b (strain 8401) protein is Anti-adapter protein IraP.